We begin with the raw amino-acid sequence, 176 residues long: Glycine-rich RNA-binding protein 7 (176 aa).

The residue at position 2 (alanine 2) is an N-acetylalanine. The interval 2–41 (ASGDVEYRCFVGGLAWATDDRALETAFAQYGDVIDSKIIN) is required for RNA chaperone activity. The region spanning 8-86 (YRCFVGGLAW…RSITVNEAQS (79 aa)) is the RRM domain. At arginine 49 the chain carries ADP-ribosylarginine; by HopU1. The segment at 83 to 103 (EAQSRGSGGGGGHRGGGGGGY) is disordered. Gly residues predominate over residues 88–103 (GSGGGGGHRGGGGGGY). Residues 88 to 175 (GSGGGGGHRG…GYGGSGGGGG (88 aa)) form a glycine-rich (GR) required for cell-to-cell movement region. Residues 97–148 (GGGGGGYRSGGGGGYSGGGGSYGGGGGRREGGGGYSGGGGGYSSRGGGGGSY) are nuclear targeting sequence (M9). Serine 105 and serine 117 each carry phosphoserine. Residues 131–176 (YSGGGGGYSSRGGGGGSYGGGRREGGGGYGGGEGGGYGGSGGGGGW) are disordered.

This sequence belongs to the GR-RBP family. In terms of assembly, interacts with TRN1. Interacts with the Pseudomonas syringae type III effector HopU1. Binds to small phloem-mobile single-stranded RNAs (ss-sRNA, e.g. small interfering RNA (siRNA) and microRNA (miRNA)) in the phloeme exudate, including viral-derived sRNA (vsiRNA). In terms of processing, ADP-ribosylated by the Pseudomonas syringae type III effector HopU1. ADP-ribosylation reduces the ability of the protein to bind RNA. As to expression, ubiquitous with strong expression in guard cell.

It is found in the cytoplasm. The protein resides in the nucleus. The protein localises to the secreted. Its function is as follows. Plays a role in RNA transcription or processing during stress. Binds RNAs and DNAs sequence with a preference to single-stranded nucleic acids. Displays strong affinity to poly(U) and poly(G) sequence. Involved in mRNA alternative splicing of numerous targets by modulating splice site selection. Negatively regulates the circadian oscillations of its own transcript as well as RBG8 transcript. Forms an interlocked post-transcriptional negative feedback loop with the RBG8 autoregulatory circuit. Both proteins negatively autoregulate and reciprocally crossregulate by binding to their pre-mRNAs and promoting unproductive splicing coupled to degradation via the NMD pathway. Involved in the regulation of abscisic acid and stress responses. Affects the growth and stress tolerance under high salt and dehydration stress conditions, and also confers freezing tolerance, particularly via the regulation of stomatal opening and closing in the guard cells. Exhibits RNA chaperone activity during the cold adaptation process. Involved in the export of mRNAs from the nucleus to the cytoplasm under cold stress conditions. Target of the Pseudomonas syringae type III effector HopU1, which could probably be involved in plant innate immunity. Component of the flowering autonomous pathway which promotes floral transition, at least partly by down-regulating FLC. Mediates cell-to-cell trafficking of RNA interference (RNAi) signals (small RNAs (sRNA), e.g. small interfering RNA (siRNA) and microRNA (miRNA)) which regulate growth and development, as well as responses to environmental inputs, including pathogen attack; can compromise zucchini yellow mosaic virus (ZYMV) and tobacco rattle virus (TRV) infections at the early stage. In Arabidopsis thaliana (Mouse-ear cress), this protein is Glycine-rich RNA-binding protein 7.